A 118-amino-acid chain; its full sequence is 5-hydroxyisourate hydrolase (118 aa).

Residues His7, Arg46, and Tyr115 each contribute to the substrate site.

This sequence belongs to the transthyretin family. 5-hydroxyisourate hydrolase subfamily. In terms of assembly, homotetramer.

It catalyses the reaction 5-hydroxyisourate + H2O = 5-hydroxy-2-oxo-4-ureido-2,5-dihydro-1H-imidazole-5-carboxylate + H(+). Catalyzes the hydrolysis of 5-hydroxyisourate (HIU) to 2-oxo-4-hydroxy-4-carboxy-5-ureidoimidazoline (OHCU). The polypeptide is 5-hydroxyisourate hydrolase (Brucella melitensis biotype 1 (strain ATCC 23456 / CCUG 17765 / NCTC 10094 / 16M)).